We begin with the raw amino-acid sequence, 214 residues long: Large ribosomal subunit protein uL4 (214 aa).

A disordered region spans residues 56–86; it reads THKVKNRAEVSGTGKKPWKQKSTGKARAGSK. Over residues 71–85 the composition is skewed to basic residues; sequence KPWKQKSTGKARAGS.

This sequence belongs to the universal ribosomal protein uL4 family. As to quaternary structure, part of the 50S ribosomal subunit.

One of the primary rRNA binding proteins, this protein initially binds near the 5'-end of the 23S rRNA. It is important during the early stages of 50S assembly. It makes multiple contacts with different domains of the 23S rRNA in the assembled 50S subunit and ribosome. Its function is as follows. Forms part of the polypeptide exit tunnel. The polypeptide is Large ribosomal subunit protein uL4 (Mesomycoplasma hyopneumoniae (strain 232) (Mycoplasma hyopneumoniae)).